The chain runs to 340 residues: Heat-inducible transcription repressor HrcA (340 aa).

The protein belongs to the HrcA family.

Negative regulator of class I heat shock genes (grpE-dnaK-dnaJ and groELS operons). Prevents heat-shock induction of these operons. The chain is Heat-inducible transcription repressor HrcA from Burkholderia mallei (strain NCTC 10247).